The primary structure comprises 198 residues: MRLAVFGGSFDPPHNGHLALCLYARELLQVDRLVISASNNPLKDAPQAADRDRVKMAELLAETINRTGAFAEVSSWEANRGHPVYTIDLMEYLEEIYSTSDLTLLIGEDNFLNFRQWKSWEELIRRYSIIVFGRKADDGASDDSAISERLHDQSFRHIDLNLPLSSTEIRKRLASGDDCSAEIPSPIWQYIVENQLYQ.

This sequence belongs to the NadD family.

It catalyses the reaction nicotinate beta-D-ribonucleotide + ATP + H(+) = deamido-NAD(+) + diphosphate. It participates in cofactor biosynthesis; NAD(+) biosynthesis; deamido-NAD(+) from nicotinate D-ribonucleotide: step 1/1. Catalyzes the reversible adenylation of nicotinate mononucleotide (NaMN) to nicotinic acid adenine dinucleotide (NaAD). The polypeptide is Probable nicotinate-nucleotide adenylyltransferase (Chlorobium phaeobacteroides (strain BS1)).